Here is a 118-residue protein sequence, read N- to C-terminus: Ribosome-binding factor A (118 aa).

It belongs to the RbfA family. Monomer. Binds 30S ribosomal subunits, but not 50S ribosomal subunits or 70S ribosomes.

It localises to the cytoplasm. In terms of biological role, one of several proteins that assist in the late maturation steps of the functional core of the 30S ribosomal subunit. Associates with free 30S ribosomal subunits (but not with 30S subunits that are part of 70S ribosomes or polysomes). Required for efficient processing of 16S rRNA. May interact with the 5'-terminal helix region of 16S rRNA. This chain is Ribosome-binding factor A, found in Bacillus cereus (strain AH187).